The chain runs to 250 residues: 3-deoxy-manno-octulosonate cytidylyltransferase (250 aa).

Belongs to the KdsB family.

The protein resides in the cytoplasm. The enzyme catalyses 3-deoxy-alpha-D-manno-oct-2-ulosonate + CTP = CMP-3-deoxy-beta-D-manno-octulosonate + diphosphate. Its pathway is nucleotide-sugar biosynthesis; CMP-3-deoxy-D-manno-octulosonate biosynthesis; CMP-3-deoxy-D-manno-octulosonate from 3-deoxy-D-manno-octulosonate and CTP: step 1/1. The protein operates within bacterial outer membrane biogenesis; lipopolysaccharide biosynthesis. Its function is as follows. Activates KDO (a required 8-carbon sugar) for incorporation into bacterial lipopolysaccharide in Gram-negative bacteria. The protein is 3-deoxy-manno-octulosonate cytidylyltransferase of Xanthomonas campestris pv. campestris (strain 8004).